Consider the following 418-residue polypeptide: MNQKQQKPTLSGQRFKTRKRDEKERFDPTQFQDCIIQGLTETGTDLEAVAKFLDASGAKLDYRRYAETLFDILVAGGMLAPGGTLADDMTRTDVCVFAAQEDLETMQAFAQVFNKLIRRYKYLEKGFEDEVKKLLLFLKGFSESERNKLAMLTGILLANGTLNASILNSLYNENLVKEGVSAAFAVKLFKSWINEKDINAVAVSLRKVNMDNRLMELFPANKQSVEHFSKYFTEAGLKELSEYVRNQQTIGARKELQKELQEQMSRGDPFKDIILYVKEEMKKNNISEQTVIAIIWSSVMSTVEWNKKEELVAEQAIKHLKQYSPLLAAFTTQGQSELTLLLKIQEYCYDNIHFMKAFQKIVVLFYKAEVLSEEPILKWYKDAHLAKGKSVFLEQMKKFVEWLKNAEEESESEAEEGD.

A compositionally biased stretch (polar residues) spans 1–14 (MNQKQQKPTLSGQR). Residues 1–25 (MNQKQQKPTLSGQRFKTRKRDEKER) are disordered. The W2 domain maps to 246–413 (NQQTIGARKE…KNAEEESESE (168 aa)).

Belongs to the BZW family.

Functionally, translation initiation regulator which may repress repeat-associated non-AUG (RAN) initiated translation probably by acting as a competitive inhibitor of eukaryotic translation initiation factor 5 (EIF5) function. Enhances histone H4 gene transcription but does not seem to bind DNA directly. The sequence is that of eIF5-mimic protein 2 (BZW1) from Gallus gallus (Chicken).